The following is a 478-amino-acid chain: MALPGGAAMNITIRLQFEKDIVSFSDIAAAIGKAGGDIVGIDVISSSKVHTVRDITVSALDTKQCDLIIEALKKIRGVKIVNVSDRTFLMHIGGKIETNSKIPVKTRDDLSRVYTPGVARVCTAIAEDPRKAYSLTIKRNTVAVVSDGTAVLGLGDIGPYAAMPVMEGKAMLFKEFAGVDAFPICLDTKDTEEIIQIVKAIAPAFGGINLEDISAPRCFEIEKRLKEELDIPVFHDDQHGTAVVLLAGLLNALKIVDKKLEDIKVVLTGIGAAGIACTKILLAAGVRNIIGVDRHGAIHRDETYENPYWQEYAQLTNPDNLKGSLSDVIAGADVFIGVSAPGILKVEDVKKMARDPIVFAMANPIPEIDPELAEPYVRVMATGRSDYPNQINNVLCFPGIFRGALDCRAREINEEMKLAAAKAIASVVTEDELNETYIIPSVFNSKVVERVRQAVVEAAYRTGVARKDNIPVGGYTGQ.

The 75-residue stretch at 12–86 folds into the ACT domain; it reads TIRLQFEKDI…GVKIVNVSDR (75 aa). The Proton donor role is filled by Tyr114. The Proton acceptor role is filled by Lys169. The a divalent metal cation site is built by Glu211, Asp212, and Asp237. NAD(+) is bound by residues 270–273, Asn363, and Asn393; that span reads IGAA.

Belongs to the malic enzymes family. Homotetramer. The cofactor is Mg(2+). Mn(2+) is required as a cofactor.

The enzyme catalyses (S)-malate + NAD(+) = pyruvate + CO2 + NADH. It catalyses the reaction oxaloacetate + H(+) = pyruvate + CO2. Its activity is regulated as follows. The activity is enhanced 5-7 times by ammonium and potassium. Its function is as follows. In addition to the NAD-dependent oxidative decarboxylation of L-malate, the enzyme catalyzes the decarboxylation of oxaloacetate. The protein is NAD-dependent malic enzyme of Geobacillus stearothermophilus (Bacillus stearothermophilus).